An 888-amino-acid polypeptide reads, in one-letter code: Glutamate receptor 3 (888 aa).

A signal peptide spans 1-22 (MGQSVLRAVFFLVLGLLGHSHG). Residues 23–546 (GFPNTISIGG…GVFSFLDPLA (524 aa)) are Extracellular-facing. 5 N-linked (GlcNAc...) asparagine glycosylation sites follow: Asn57, Asn260, Asn374, Asn409, and Asn416. Cys85 and Cys334 are joined by a disulfide. Positions 502, 504, and 509 each coordinate L-glutamate. Residues 547-567 (YEIWMCIVFAYIGVSVVLFLV) traverse the membrane as a helical segment. Over 568 to 596 (SRFSPYEWHLEDNNEEPRDPQSPPDPPNE) the chain is Cytoplasmic. The segment at residues 597-612 (FGIFNSLWFSLGAFMQ) is an intramembrane region (helical; Pore-forming). An intramembrane segment occupies 613–615 (QGC). Cys615 carries the S-palmitoyl cysteine lipid modification. The Cytoplasmic segment spans residues 616–621 (DISPRS). A helical transmembrane segment spans residues 622 to 642 (LSGRIVGGVWWFFTLIIISSY). Residues 643 to 817 (TANLAAFLTV…DKTSALSLSN (175 aa)) are Extracellular-facing. L-glutamate contacts are provided by Ser680, Thr681, and Glu731. An intrachain disulfide couples Cys744 to Cys799. Residues 818–838 (VAGVFYILVGGLGLAMMVALI) form a helical membrane-spanning segment. Over 839–888 (EFCYKSRAESKRMKLTKNTQNFKPAPATNTQNYATYREGYNVYGTESVKI) the chain is Cytoplasmic. Cys841 is lipidated: S-palmitoyl cysteine. Tyr871 and Tyr881 each carry phosphotyrosine.

This sequence belongs to the glutamate-gated ion channel (TC 1.A.10.1) family. GRIA3 subfamily. As to quaternary structure, homotetramer or heterotetramer of pore-forming glutamate receptor subunits. Tetramers may be formed by the dimerization of dimers. Interacts with PICK1, GRIP1 and GRIP2. Found in a complex with GRIA1, GRIA2, GRIA4, CNIH2, CNIH3, CACNG2, CACNG3, CACNG4, CACNG5, CACNG7 and CACNG8. Interacts with CACNG5. Found in a complex with GRIA1, GRIA2, GRIA4, DLG4, CACNG8 and CNIH2.

It localises to the cell membrane. Its subcellular location is the postsynaptic cell membrane. The protein localises to the postsynaptic density membrane. It catalyses the reaction Ca(2+)(in) = Ca(2+)(out). In terms of biological role, ionotropic glutamate receptor that functions as a ligand-gated cation channel, gated by L-glutamate and glutamatergic agonists such as alpha-amino-3-hydroxy-5-methyl-4-isoxazolepropionic acid (AMPA), quisqualic acid, and kainic acid. L-glutamate acts as an excitatory neurotransmitter at many synapses in the central nervous system and plays an important role in fast excitatory synaptic transmission by inducing long-term potentiation. Binding of the excitatory neurotransmitter L-glutamate induces a conformation change, leading to the opening of the cation channel, and thereby converts the chemical signal to an electrical impulse upon entry of calcium. The receptor then desensitizes rapidly and enters a transient inactive state, characterized by the presence of bound agonist. In the presence of CACNG8, shows resensitization which is characterized by a delayed accumulation of current flux upon continued application of glutamate. The protein is Glutamate receptor 3 of Mus musculus (Mouse).